The sequence spans 212 residues: Peptide methionine sulfoxide reductase MsrA (212 aa).

The span at 1–14 (MSSIDKTQRITQSD) shows a compositional bias: polar residues. Positions 1-21 (MSSIDKTQRITQSDALPGRST) are disordered. Cys52 is a catalytic residue.

Belongs to the MsrA Met sulfoxide reductase family.

It carries out the reaction L-methionyl-[protein] + [thioredoxin]-disulfide + H2O = L-methionyl-(S)-S-oxide-[protein] + [thioredoxin]-dithiol. The catalysed reaction is [thioredoxin]-disulfide + L-methionine + H2O = L-methionine (S)-S-oxide + [thioredoxin]-dithiol. Its function is as follows. Has an important function as a repair enzyme for proteins that have been inactivated by oxidation. Catalyzes the reversible oxidation-reduction of methionine sulfoxide in proteins to methionine. This chain is Peptide methionine sulfoxide reductase MsrA, found in Pectobacterium carotovorum subsp. carotovorum (strain PC1).